The following is a 512-amino-acid chain: ETS translocation variant 3 (512 aa).

Positions 35-116 (IQLWHFILEL…KGKRFTYKFN (82 aa)) form a DNA-binding region, ETS. Residues 136–222 (VPQSAPPVPT…NAIGGGGIGH (87 aa)) form a disordered region. Serine 139, serine 159, and serine 315 each carry phosphoserine. Residues 158–184 (HSPTNDVQPGRFSASSLTASGQESSNG) show a composition bias toward polar residues. Residues 336 to 512 (PEESTQFSIK…QGLATAAADA (177 aa)) are disordered. Composition is skewed to basic and acidic residues over residues 380–406 (IKVE…HTQE), 453–468 (DRPG…KEDA), and 479–491 (RWND…ELSK). Lysine 381 participates in a covalent cross-link: Glycyl lysine isopeptide (Lys-Gly) (interchain with G-Cter in SUMO2). At lysine 388 the chain carries N6-acetyllysine; alternate. Lysine 388 participates in a covalent cross-link: Glycyl lysine isopeptide (Lys-Gly) (interchain with G-Cter in SUMO2); alternate.

It belongs to the ETS family.

It is found in the nucleus. In terms of biological role, transcriptional repressor that contribute to growth arrest during terminal macrophage differentiation by repressing target genes involved in Ras-dependent proliferation. Represses MMP1 promoter activity. This is ETS translocation variant 3 (ETV3) from Homo sapiens (Human).